We begin with the raw amino-acid sequence, 306 residues long: MSLYDKSVTATRSAHRTSDTLHSLVAGSVAGGLEIAITYPAEFAKTRLQLNQVSGRNKQNVPWPRFGLQWYSGCIPFLIGNSVKTSIRFVSFDGYQKLLADDDGNISRFGILLAGFGAGATESLLAVTPSERIKTIIIEDRRLEKPRIRNSFHAMSIIARDHGLSGFFQGFWPTTARQSAGSAIRLGSYTFLKQVVQSRTPQGGKIGTVKTFIIGSLAGLITVYLTQPLDTIKTRMQRLEARTRYGNAFICARGILEQEGFTAFWSGAVARSLRLVMSGGIVFMVYEKVVEGLDVISPAKRYEIAA.

3 Solcar repeats span residues 18–98 (SDTL…YQKL), 109–195 (FGIL…LKQV), and 206–292 (IGTV…VVEG). 6 helical membrane-spanning segments follow: residues 24–44 (LVAG…AEFA), 67–87 (GLQW…KTSI), 113–133 (LAGF…SERI), 170–189 (GFWP…LGSY), 209–229 (VKTF…TQPL), and 267–286 (GAVA…FMVY).

It belongs to the mitochondrial carrier (TC 2.A.29) family.

Its subcellular location is the mitochondrion inner membrane. The protein operates within mycotoxin biosynthesis. Its function is as follows. Tricarboxylate transporter; part of the gene cluster that mediates the biosynthesis of fumonisins B1 (FB1), B2 (FB2), B3 (FB3), and B4 (FB4), which are carcinogenic mycotoxins. Within the pathway, FUM11 is involved the addition of the tricarballylic moieties to the carbon backbone. FUM11 makes a tricarboxylic acid precursor available for fumonisin biosynthesis via its export from the mitochondria. The biosynthesis starts with the FUM1-catalyzed carbon chain assembly from one molecule of acetyl-CoA, eight molecules of malonyl-CoA, and two molecules of methionine (in S-adenosyl form). The C18 polyketide chain is released from the enzyme by a nucleophilic attack of a carbanion, which is derived from R-carbon of alanine by decarboxylation, on the carbonyl carbon of polyketide acyl chain. This step is catalyzed by the pyridoxal 5'-phosphate-dependent aminoacyl transferase FUM8. The resultant 3-keto intermediate is then stereospecifically reduced to a 3-hydroxyl product by reductase FUM13. Subsequent oxidations at C-10 by the cytochrome P450 monooxygenase FUM2, C-14 and C-15 by FUM6, FUM12 or FUM15, tricarballylic esterification of the hydroxyl groups on C-14 and C-15 by acyltransferase FUM14, and C-5 hydroxylation by 2-keto-glutarate-dependent dioxygenase FUM3 furnish the biosynthesis of fumonisins. The tricarballylic moieties are most likely derived from the citric acid cycle, and their addition to the carbon backbone may involve FUM7, FUM10, FUM11 and FUM14. This chain is Tricarboxylate transporter FUM11, found in Gibberella moniliformis (strain M3125 / FGSC 7600) (Maize ear and stalk rot fungus).